The chain runs to 497 residues: Glycerol kinase (497 aa).

Residue threonine 12 participates in ADP binding. 3 residues coordinate ATP: threonine 12, threonine 13, and serine 14. Threonine 12 contributes to the sn-glycerol 3-phosphate binding site. Position 16 (arginine 16) interacts with ADP. Sn-glycerol 3-phosphate-binding residues include arginine 82, glutamate 83, tyrosine 134, and aspartate 243. Glycerol contacts are provided by arginine 82, glutamate 83, tyrosine 134, aspartate 243, and glutamine 244. Positions 265 and 308 each coordinate ADP. ATP contacts are provided by threonine 265, glycine 308, glutamine 312, and glycine 409. Positions 409 and 413 each coordinate ADP.

It belongs to the FGGY kinase family.

It catalyses the reaction glycerol + ATP = sn-glycerol 3-phosphate + ADP + H(+). It functions in the pathway polyol metabolism; glycerol degradation via glycerol kinase pathway; sn-glycerol 3-phosphate from glycerol: step 1/1. Its activity is regulated as follows. Inhibited by fructose 1,6-bisphosphate (FBP). Functionally, key enzyme in the regulation of glycerol uptake and metabolism. Catalyzes the phosphorylation of glycerol to yield sn-glycerol 3-phosphate. The sequence is that of Glycerol kinase from Nitratidesulfovibrio vulgaris (strain ATCC 29579 / DSM 644 / CCUG 34227 / NCIMB 8303 / VKM B-1760 / Hildenborough) (Desulfovibrio vulgaris).